The chain runs to 434 residues: 5'-deoxyadenosine deaminase (434 aa).

Zn(2+)-binding residues include His-63 and His-65. The substrate site is built by Glu-92 and His-184. Zn(2+) is bound at residue His-211. Substrate is bound by residues Glu-214 and Asp-299. Asp-299 provides a ligand contact to Zn(2+).

It belongs to the metallo-dependent hydrolases superfamily. MTA/SAH deaminase family. As to quaternary structure, homotetramer. Zn(2+) is required as a cofactor.

The enzyme catalyses 5'-deoxyadenosine + H2O + H(+) = 5'-deoxyinosine + NH4(+). It carries out the reaction S-adenosyl-L-homocysteine + H2O + H(+) = S-inosyl-L-homocysteine + NH4(+). The catalysed reaction is S-methyl-5'-thioadenosine + H2O + H(+) = S-methyl-5'-thioinosine + NH4(+). It catalyses the reaction adenosine + H2O + H(+) = inosine + NH4(+). The protein operates within amino-acid biosynthesis; S-adenosyl-L-methionine biosynthesis. Its function is as follows. Catalyzes the deamination of three SAM-derived enzymatic products, namely 5'-deoxyadenosine, S-adenosyl-L-homocysteine, and 5'-methylthioadenosine, to produce the inosine analogs. Can also deaminate adenosine. The preferred substrate for this enzyme is 5'-deoxyadenosine, but all these substrates are efficiently deaminated. Likely functions in a S-adenosyl-L-methionine (SAM) recycling pathway from S-adenosyl-L-homocysteine (SAH) produced from SAM-dependent methylation reactions. May also be involved in the recycling of 5'-deoxyadenosine, whereupon the 5'-deoxyribose moiety of 5'-deoxyinosine is further metabolized to deoxyhexoses used for the biosynthesis of aromatic amino acids in methanogens. The sequence is that of 5'-deoxyadenosine deaminase from Methanococcoides burtonii (strain DSM 6242 / NBRC 107633 / OCM 468 / ACE-M).